A 254-amino-acid chain; its full sequence is tRNA (guanine-N(1)-)-methyltransferase (254 aa).

Residues G121 and 141–146 (LGDYVL) contribute to the S-adenosyl-L-methionine site.

Belongs to the RNA methyltransferase TrmD family. Homodimer.

Its subcellular location is the cytoplasm. The catalysed reaction is guanosine(37) in tRNA + S-adenosyl-L-methionine = N(1)-methylguanosine(37) in tRNA + S-adenosyl-L-homocysteine + H(+). Functionally, specifically methylates guanosine-37 in various tRNAs. The chain is tRNA (guanine-N(1)-)-methyltransferase from Psychrobacter cryohalolentis (strain ATCC BAA-1226 / DSM 17306 / VKM B-2378 / K5).